Reading from the N-terminus, the 430-residue chain is Tektin-2 (430 aa).

Coiled-coil stretches lie at residues Lys-75 to Leu-162 and Lys-226 to Lys-380.

Belongs to the tektin family. In terms of assembly, microtubule inner protein component of sperm flagellar doublet microtubules. May interact with CCDC172. Ubiquitinated, leading to its degradation. Deubiquitinated by USP16, promoting its stability. Post-translationally, tyrosine phosphorylated. Expressed in the testes (at protein level).

It is found in the cytoplasm. Its subcellular location is the cytoskeleton. The protein resides in the cilium axoneme. The protein localises to the flagellum axoneme. It localises to the microtubule organizing center. Microtubule inner protein (MIP) part of the dynein-decorated doublet microtubules (DMTs) in cilia and flagellar axoneme. Plays a key role in the assembly or attachment of the inner dynein arm to microtubules in sperm flagella and tracheal cilia. Forms filamentous polymers in the walls of ciliary and flagellar microtubules. The protein is Tektin-2 (Tekt2) of Mus musculus (Mouse).